The chain runs to 310 residues: Beta-ketoacyl-[acyl-carrier-protein] synthase III (310 aa).

Active-site residues include cysteine 116 and histidine 239. An ACP-binding region spans residues 240-244; that stretch reads QANYR. Asparagine 269 is a catalytic residue.

This sequence belongs to the thiolase-like superfamily. FabH family. In terms of assembly, homodimer.

It localises to the cytoplasm. It catalyses the reaction malonyl-[ACP] + acetyl-CoA + H(+) = 3-oxobutanoyl-[ACP] + CO2 + CoA. The protein operates within lipid metabolism; fatty acid biosynthesis. In terms of biological role, catalyzes the condensation reaction of fatty acid synthesis by the addition to an acyl acceptor of two carbons from malonyl-ACP. Catalyzes the first condensation reaction which initiates fatty acid synthesis and may therefore play a role in governing the total rate of fatty acid production. Possesses both acetoacetyl-ACP synthase and acetyl transacylase activities. Its substrate specificity determines the biosynthesis of branched-chain and/or straight-chain of fatty acids. This is Beta-ketoacyl-[acyl-carrier-protein] synthase III from Acholeplasma laidlawii (strain PG-8A).